A 196-amino-acid chain; its full sequence is ATP-dependent Clp protease proteolytic subunit (196 aa).

The active-site Nucleophile is serine 96. Histidine 121 is an active-site residue.

It belongs to the peptidase S14 family. Fourteen ClpP subunits assemble into 2 heptameric rings which stack back to back to give a disk-like structure with a central cavity, resembling the structure of eukaryotic proteasomes.

It localises to the cytoplasm. The catalysed reaction is Hydrolysis of proteins to small peptides in the presence of ATP and magnesium. alpha-casein is the usual test substrate. In the absence of ATP, only oligopeptides shorter than five residues are hydrolyzed (such as succinyl-Leu-Tyr-|-NHMec, and Leu-Tyr-Leu-|-Tyr-Trp, in which cleavage of the -Tyr-|-Leu- and -Tyr-|-Trp bonds also occurs).. Cleaves peptides in various proteins in a process that requires ATP hydrolysis. Has a chymotrypsin-like activity. Plays a major role in the degradation of misfolded proteins. This Streptococcus salivarius protein is ATP-dependent Clp protease proteolytic subunit.